The chain runs to 749 residues: Semaphorin-3B (749 aa).

The first 24 residues, 1 to 24, serve as a signal peptide directing secretion; sequence MGRAGAAAVIPGLALLWAVGLGSA. In terms of domain architecture, Sema spans 30–513; that stretch reads RLRLSFQELQ…SRSAVAQIAL (484 aa). N-linked (GlcNAc...) asparagine glycosylation is present at Asn-82. An intrachain disulfide couples Cys-102 to Cys-113. N-linked (GlcNAc...) asparagine glycosylation occurs at Asn-124. 3 disulfides stabilise this stretch: Cys-131–Cys-140, Cys-269–Cys-380, and Cys-293–Cys-340. The N-linked (GlcNAc...) asparagine glycan is linked to Asn-427. 2 disulfide bridges follow: Cys-516–Cys-534 and Cys-644–Cys-710. The 87-residue stretch at 573–659 folds into the Ig-like C2-type domain; it reads PALLEHKVFG…GFTQPLRRLS (87 aa). Residues 702–749 are disordered; the sequence is GSANSLRMCRPQPALQSLPLESRRKGRNRRTHAPEPRAERGPRSATHW. Residues 733–743 show a composition bias toward basic and acidic residues; it reads HAPEPRAERGP.

This sequence belongs to the semaphorin family. As to expression, expressed abundantly but differentially in a variety of neural and nonneural tissues.

The protein resides in the secreted. It is found in the endoplasmic reticulum. In terms of biological role, inhibits axonal extension by providing local signals to specify territories inaccessible for growing axons. This chain is Semaphorin-3B (SEMA3B), found in Homo sapiens (Human).